Reading from the N-terminus, the 204-residue chain is Tetraspanin-13 (204 aa).

Over 1-19 (MVCGGFSCSKNCLCALNLL) the chain is Cytoplasmic. A helical membrane pass occupies residues 20–40 (YTLVSLLLIGIAAWGIGFGLI). Topologically, residues 41 to 44 (SSLR) are extracellular. A helical transmembrane segment spans residues 45–65 (VVGVVIAVGIFLFLIALVGLI). At 66–72 (GAVKHHQ) the chain is on the cytoplasmic side. Residues 73–93 (VLLFFYMIILLLVFIVQFSVS) traverse the membrane as a helical segment. Residues 94–167 (CACLALNREQ…IGEYAGEVLR (74 aa)) are Extracellular-facing. 2 N-linked (GlcNAc...) asparagine glycosylation sites follow: asparagine 113 and asparagine 137. Serine 143 is modified (phosphoserine). Residues 168–188 (FVGGIGLFFSFTEILGVWLTY) form a helical membrane-spanning segment. Topologically, residues 189–204 (RYRNQKDPRANPSAFL) are cytoplasmic.

It belongs to the tetraspanin (TM4SF) family.

It localises to the membrane. This is Tetraspanin-13 (Tspan13) from Rattus norvegicus (Rat).